A 561-amino-acid chain; its full sequence is Potassium-transporting ATPase potassium-binding subunit (561 aa).

12 helical membrane passes run 2-22, 65-85, 135-155, 177-197, 253-273, 280-300, 327-347, 353-373, 378-398, 413-433, 482-502, and 531-551; these read GLGLLQIGLTLCIVIAITPVL, YIRAILYTNLFMGILVYSLIH, ALGFLMFTSAATGLAVGIAFI, ILLPISVIGAIALVLLGVPQT, FIETIAMIAIPAAMIYTYGVF, AWLLFWMVFIVFVILVWVAAT, FGWAETALWAVMTTATMCGAV, ALMPQGLFATLFNLFLQIIWG, GTAYLFIYLILTVFLTGLMVG, IVLASLILLVHPIVVLIPSAI, LSTSLSILVGRYVPIIAMLLL, and AGIVLILGVLTFFPVLALGPI.

Belongs to the KdpA family. In terms of assembly, the system is composed of three essential subunits: KdpA, KdpB and KdpC.

The protein resides in the cell membrane. Its function is as follows. Part of the high-affinity ATP-driven potassium transport (or Kdp) system, which catalyzes the hydrolysis of ATP coupled with the electrogenic transport of potassium into the cytoplasm. This subunit binds the extracellular potassium ions and delivers the ions to the membrane domain of KdpB through an intramembrane tunnel. This chain is Potassium-transporting ATPase potassium-binding subunit, found in Anabaena sp. (strain L31).